We begin with the raw amino-acid sequence, 529 residues long: Probable anion transporter 1, chloroplastic (529 aa).

The N-terminal 55 residues, 1–55, are a transit peptide targeting the chloroplast; sequence MLYLLPLSVSCRVPGSPPAPRSRRFLDPGGGRGVGDGLGGVRVFRRRALRGTDVR. Disordered stretches follow at residues 13-39 and 52-78; these read VPGS…DGLG and TDVR…GGYG. The span at 28–39 shows a compositional bias: gly residues; sequence PGGGRGVGDGLG. Residues 67–76 are compositionally biased toward basic and acidic residues; the sequence is RHDDARHDGG. Helical transmembrane passes span 120–140, 158–178, 187–207, 209–229, 251–271, 274–294, 340–360, 378–398, 418–438, 469–489, and 503–523; these read WAIV…RVNM, VGLI…AGGI, TVLG…PFAA, LGLP…GVAM, LVYS…PLLI, FGWP…FSTW, VWAL…LLTW, LFCV…GWIA, IGFL…SPAM, AGVL…FGTA, and VFKV…LFST.

It belongs to the major facilitator superfamily. Sodium/anion cotransporter (TC 2.A.1.14) family.

It localises to the plastid. The protein localises to the chloroplast membrane. Functionally, probable anion transporter. The sequence is that of Probable anion transporter 1, chloroplastic (PHT4;1) from Oryza sativa subsp. japonica (Rice).